The following is a 331-amino-acid chain: Elongation factor Ts, mitochondrial (331 aa).

Residues 1–14 constitute a mitochondrion transit peptide; sequence MIVSRQVIRSVVRK.

This sequence belongs to the EF-Ts family.

It is found in the mitochondrion. Functionally, associates with the EF-Tu.GDP complex and induces the exchange of GDP to GTP. It remains bound to the aminoacyl-tRNA.EF-Tu.GTP complex up to the GTP hydrolysis stage on the ribosome. The sequence is that of Elongation factor Ts, mitochondrial from Brugia malayi (Filarial nematode worm).